The primary structure comprises 444 residues: C4-dicarboxylate transport protein (444 aa).

A run of 8 helical transmembrane segments spans residues leucine 7–tyrosine 29, isoleucine 44–methionine 66, alanine 79–valine 101, isoleucine 143–alanine 165, valine 186–phenylalanine 208, leucine 221–isoleucine 243, valine 291–methionine 313, and phenylalanine 353–leucine 375. The interval serine 418–lysine 444 is disordered.

The protein belongs to the dicarboxylate/amino acid:cation symporter (DAACS) (TC 2.A.23) family.

The protein resides in the cell inner membrane. In terms of biological role, responsible for the transport of dicarboxylates such as succinate, fumarate, and malate from the periplasm across the inner membrane. This chain is C4-dicarboxylate transport protein, found in Pseudomonas chlororaphis (Pseudomonas aureofaciens).